We begin with the raw amino-acid sequence, 502 residues long: ATP synthase subunit beta (502 aa).

153 to 160 (GGAGVGKT) serves as a coordination point for ATP.

Belongs to the ATPase alpha/beta chains family. F-type ATPases have 2 components, CF(1) - the catalytic core - and CF(0) - the membrane proton channel. CF(1) has five subunits: alpha(3), beta(3), gamma(1), delta(1), epsilon(1). CF(0) has three main subunits: a(1), b(2) and c(9-12). The alpha and beta chains form an alternating ring which encloses part of the gamma chain. CF(1) is attached to CF(0) by a central stalk formed by the gamma and epsilon chains, while a peripheral stalk is formed by the delta and b chains.

The protein resides in the cell membrane. The catalysed reaction is ATP + H2O + 4 H(+)(in) = ADP + phosphate + 5 H(+)(out). Functionally, produces ATP from ADP in the presence of a proton gradient across the membrane. The catalytic sites are hosted primarily by the beta subunits. In Amoebophilus asiaticus (strain 5a2), this protein is ATP synthase subunit beta.